The chain runs to 456 residues: Glycosyl hydrolase family 109 protein (456 aa).

The tat-type signal signal peptide spans 1–31; that stretch reads MKLNRRHFLKTAGLSAAGILTSQLPLSSAEA. NAD(+) contacts are provided by residues 62 to 63, D84, 133 to 136, 153 to 154, and N182; these read QR, WEWH, and EV. Substrate contacts are provided by residues Y211, R230, 242-245, and Y324; that span reads YPTH. Residue Y242 coordinates NAD(+).

This sequence belongs to the Gfo/Idh/MocA family. Glycosyl hydrolase 109 subfamily. Requires NAD(+) as cofactor. Post-translationally, predicted to be exported by the Tat system. The position of the signal peptide cleavage has not been experimentally proven.

Functionally, glycosidase. This chain is Glycosyl hydrolase family 109 protein, found in Shewanella pealeana (strain ATCC 700345 / ANG-SQ1).